A 284-amino-acid polypeptide reads, in one-letter code: Xyloglucan endotransglucosylase/hydrolase protein 22 (284 aa).

The first 21 residues, 1–21, serve as a signal peptide directing secretion; that stretch reads MAITYLLPLFLSLIITSSVSA. A GH16 domain is found at 22–211; sequence NFQRDVEITW…WSKAPFTASY (190 aa). The active-site Nucleophile is the Glu-97. Glu-101 functions as the Proton donor in the catalytic mechanism. Xyloglucan is bound at residue Glu-101. The N-linked (GlcNAc...) asparagine glycan is linked to Asn-105. Xyloglucan is bound by residues 114–116, 124–126, 190–191, and Gly-195; these read HTN, DKE, and DW. Cys-219 and Cys-228 are oxidised to a cystine. N-linked (GlcNAc...) asparagine glycosylation is present at Asn-230. A disulfide bridge links Cys-267 with Cys-281. Arg-272 lines the xyloglucan pocket.

Belongs to the glycosyl hydrolase 16 family. XTH group 2 subfamily. In terms of processing, contains at least one intrachain disulfide bond essential for its enzymatic activity. N-glycosylated; essential for its enzymatic activity. Highly expressed. Predominantly expressed in green siliques. Expressed in young expanding leaves, trichomes, lateral root primordia, vascular tissue, abscission zones and elongating hypocols. Following wind stimulation, it decreases in the leaves of wind-stimulated plants, while it strongly increases in sites around cells of the pith parenchyma, between the vascular elements, and within the epidermis.

Its subcellular location is the secreted. The protein localises to the cell wall. It is found in the extracellular space. The protein resides in the apoplast. It catalyses the reaction breaks a beta-(1-&gt;4) bond in the backbone of a xyloglucan and transfers the xyloglucanyl segment on to O-4 of the non-reducing terminal glucose residue of an acceptor, which can be a xyloglucan or an oligosaccharide of xyloglucan.. Catalyzes xyloglucan endohydrolysis (XEH) and/or endotransglycosylation (XET). Cleaves and religates xyloglucan polymers, an essential constituent of the primary cell wall, and thereby participates in cell wall construction of growing tissues. Its induction in case of mechanical stress, suggests that it may contribute in the adaptive changes in morphogenesis by being recruited to alter tissues tensil strength, or flexibility, enabling adaptation to mechanically stressful environments. This Arabidopsis thaliana (Mouse-ear cress) protein is Xyloglucan endotransglucosylase/hydrolase protein 22 (XTH22).